The sequence spans 290 residues: GTPase Era (290 aa).

Positions 2–169 constitute an Era-type G domain; the sequence is KSGFAAILGR…KNKIYENFSE (168 aa). The interval 10 to 17 is G1; the sequence is GRPSTGKS. 10–17 contributes to the GTP binding site; that stretch reads GRPSTGKS. Residues 36 to 40 form a G2 region; sequence QTTRN. Positions 57 to 60 are G3; the sequence is DTPG. GTP-binding positions include 57–61 and 119–122; these read DTPGF and NKVD. A G4 region spans residues 119 to 122; the sequence is NKVD. Positions 148-150 are G5; sequence ISA. Residues 200–276 form the KH type-2 domain; the sequence is LKEELPYSLY…NLFLQVKLKK (77 aa).

Belongs to the TRAFAC class TrmE-Era-EngA-EngB-Septin-like GTPase superfamily. Era GTPase family. As to quaternary structure, monomer.

The protein resides in the cytoplasm. It is found in the cell inner membrane. An essential GTPase that binds both GDP and GTP, with rapid nucleotide exchange. Plays a role in 16S rRNA processing and 30S ribosomal subunit biogenesis and possibly also in cell cycle regulation and energy metabolism. The sequence is that of GTPase Era from Borrelia garinii subsp. bavariensis (strain ATCC BAA-2496 / DSM 23469 / PBi) (Borreliella bavariensis).